The primary structure comprises 129 residues: Protein Turandot A1 (129 aa).

The signal sequence occupies residues 1–21 (MNSSTALMCFALLLISPLCMG). Residue Asn-49 is glycosylated (N-linked (GlcNAc...) asparagine).

Belongs to the Turandot family.

It localises to the secreted. Functionally, a humoral factor that plays a role in stress tolerance; gives increased resistance to the lethal effects of bacterial challenge and stress. Regulated by the JAK/STAT pathway and NF-KB-like Relish pathway in the fat body, upd3 in the hemocytes and Mekk1 in response to septic injury and consequent immune response. The sequence is that of Protein Turandot A1 (TotA1) from Drosophila simulans (Fruit fly).